A 272-amino-acid chain; its full sequence is Cell wall synthesis protein Wag31 (272 aa).

Disordered regions lie at residues 1–22 and 62–109; these read MPLT…GKRG and AARS…SEDT. Positions 30 to 67 form a coiled coil; it reads AFLDLVENELTRLIEENADLRQRVAELDQELAAARSGA. 2 stretches are compositionally biased toward low complexity: residues 62–76 and 94–105; these read AARS…ATSS and VYEAPAQPAAPQ. Thr-74 carries the phosphothreonine modification. Residues 139–206 are a coiled coil; that stretch reads LSDARAQAEA…AERKHSEIMG (68 aa). A disordered region spans residues 243 to 272; it reads ELGQRGSAAPVDSSANSDASGFGQFNRGNN.

The protein belongs to the DivIVA family. As to quaternary structure, forms homooligomers. Interacts with PbpB and CwsA. Phosphorylated by PknA.

The protein resides in the cytoplasm. In terms of biological role, important for maintaining cell shape and cell wall integrity by localizing peptidoglycan synthesis to the cell poles. Protects PbpB (PBP3, FtsI) from oxidative stress-induced cleavage. This Mycolicibacterium smegmatis (strain ATCC 700084 / mc(2)155) (Mycobacterium smegmatis) protein is Cell wall synthesis protein Wag31 (wag31).